The primary structure comprises 866 residues: Primer-independent DNA polymerase PolB (866 aa).

The segment at 50-286 (SDLTLHIGFD…DRVPATIGAM (237 aa)) is exonuclease domain. The interval 287–385 (AVSRFTKTLK…GLLDILTPDY (99 aa)) is palm1 domain. Residues 386–481 (GNIRLSKNPD…NSESTSVFLP (96 aa)) form a TPR1 domain region. Residues 482-522 (FVQQVRENRNRHIKGSLEEKFWKEIGNSLYGKLAQGLRAKT) form a fingers domain region. The TPR2 domain stretch occupies residues 523 to 549 (AFDTARGLNRSLPPSSVTQPFFAAHVT). The tract at residues 550–678 (GFIRAVVGEL…PGQTLSRSTL (129 aa)) is palm2 domain. Residues 679–866 (ISTREMWLSE…RKYPTFCLPV (188 aa)) are thumb domain.

It depends on Mn(2+) as a cofactor.

It catalyses the reaction DNA(n) + a 2'-deoxyribonucleoside 5'-triphosphate = DNA(n+1) + diphosphate. DNA polymerase with primer-independent templated DNA polymerization activity, primer-dependent DNA polymerization activity with strand displacement, translesion synthesis activity across non-bulky base damage, 3'-5' exodeoxyribonuclease activity, and de novo primer synthesis activity. The enzyme is processive and faithful. Translation synthesis across abasic sites is coupled to de novo primer synthesis. Overexpression of wild-type protein increases survival of cells upon mitomycin C or UV treatment. The sequence is that of Primer-independent DNA polymerase PolB (pi-polB) from Escherichia coli.